Consider the following 352-residue polypeptide: UPF0324 membrane protein RA0957 (352 aa).

10 consecutive transmembrane segments (helical) span residues 24–43, 48–67, 104–126, 136–158, 169–191, 201–223, 235–257, 272–294, 301–318, and 328–350; these read VVSY…SAQF, YGAP…NFLS, LGVS…AIIV, LSLL…LNAV, LALT…PVLA, SGVF…FAMS, IVRV…VLGA, GFVL…AAAG, SRWL…KTSV, and HVTL…LLWY.

It belongs to the UPF0324 family.

The protein localises to the cell membrane. The chain is UPF0324 membrane protein RA0957 from Rhizobium meliloti (strain 1021) (Ensifer meliloti).